A 408-amino-acid polypeptide reads, in one-letter code: 1-deoxy-D-xylulose 5-phosphate reductoisomerase (408 aa).

Residues Thr-27, Gly-28, Ser-29, Ile-30, Ala-53, Arg-54, Asn-55, and Asn-140 each contribute to the NADPH site. Lys-141 provides a ligand contact to 1-deoxy-D-xylulose 5-phosphate. Residue Glu-142 coordinates NADPH. Residue Asp-166 participates in Mn(2+) binding. Residues Ser-167, Glu-168, Ser-192, and His-215 each contribute to the 1-deoxy-D-xylulose 5-phosphate site. Glu-168 is a Mn(2+) binding site. Gly-221 provides a ligand contact to NADPH. Residues Ser-228, Asn-233, Lys-234, and Glu-237 each contribute to the 1-deoxy-D-xylulose 5-phosphate site. Mn(2+) is bound at residue Glu-237.

The protein belongs to the DXR family. Mg(2+) serves as cofactor. Requires Mn(2+) as cofactor.

It carries out the reaction 2-C-methyl-D-erythritol 4-phosphate + NADP(+) = 1-deoxy-D-xylulose 5-phosphate + NADPH + H(+). It functions in the pathway isoprenoid biosynthesis; isopentenyl diphosphate biosynthesis via DXP pathway; isopentenyl diphosphate from 1-deoxy-D-xylulose 5-phosphate: step 1/6. Functionally, catalyzes the NADPH-dependent rearrangement and reduction of 1-deoxy-D-xylulose-5-phosphate (DXP) to 2-C-methyl-D-erythritol 4-phosphate (MEP). The chain is 1-deoxy-D-xylulose 5-phosphate reductoisomerase from Nitratidesulfovibrio vulgaris (strain ATCC 29579 / DSM 644 / CCUG 34227 / NCIMB 8303 / VKM B-1760 / Hildenborough) (Desulfovibrio vulgaris).